The primary structure comprises 661 residues: DNA-directed RNA polymerase subunit beta' (661 aa).

Zn(2+) contacts are provided by cysteine 69, cysteine 71, cysteine 87, and cysteine 90. Mg(2+)-binding residues include aspartate 489, aspartate 491, and aspartate 493.

Belongs to the RNA polymerase beta' chain family. RpoC1 subfamily. In terms of assembly, in plastids the minimal PEP RNA polymerase catalytic core is composed of four subunits: alpha, beta, beta', and beta''. When a (nuclear-encoded) sigma factor is associated with the core the holoenzyme is formed, which can initiate transcription. The cofactor is Mg(2+). Requires Zn(2+) as cofactor.

The protein localises to the plastid. It localises to the chloroplast. The enzyme catalyses RNA(n) + a ribonucleoside 5'-triphosphate = RNA(n+1) + diphosphate. Functionally, DNA-dependent RNA polymerase catalyzes the transcription of DNA into RNA using the four ribonucleoside triphosphates as substrates. The sequence is that of DNA-directed RNA polymerase subunit beta' from Chaetosphaeridium globosum (Charophycean green alga).